The sequence spans 256 residues: Leucine-rich repeat-containing protein 18 (256 aa).

LRR repeat units lie at residues glycine 28–leucine 49, glutamate 51–phenylalanine 72, asparagine 74–methionine 95, serine 97–asparagine 118, asparagine 122–lysine 144, glutamate 145–proline 167, lysine 168–valine 189, and arginine 194–glutamine 215.

It localises to the cytoplasm. In terms of biological role, may be involved in the regulation of spermatogenesis and sperm maturation. The sequence is that of Leucine-rich repeat-containing protein 18 (Lrrc18) from Rattus norvegicus (Rat).